We begin with the raw amino-acid sequence, 347 residues long: NADH-ubiquinone oxidoreductase chain 2 (347 aa).

A run of 11 helical transmembrane segments spans residues 3-23 (PPIF…VMTS), 25-45 (HWML…PILM), 59-79 (YFLT…INLL), 96-116 (ILMT…FWVP), 122-142 (IPLS…LSVL), 149-169 (INPN…GWGG), 178-198 (ILAY…LYNP), 201-221 (MILN…LFML), 237-257 (MPLI…LPPL), 274-294 (EMII…YFYM), and 325-345 (FLPP…MISI).

The protein belongs to the complex I subunit 2 family. As to quaternary structure, core subunit of respiratory chain NADH dehydrogenase (Complex I) which is composed of 45 different subunits. Interacts with TMEM242.

It localises to the mitochondrion inner membrane. It catalyses the reaction a ubiquinone + NADH + 5 H(+)(in) = a ubiquinol + NAD(+) + 4 H(+)(out). Its function is as follows. Core subunit of the mitochondrial membrane respiratory chain NADH dehydrogenase (Complex I) which catalyzes electron transfer from NADH through the respiratory chain, using ubiquinone as an electron acceptor. Essential for the catalytic activity and assembly of complex I. The protein is NADH-ubiquinone oxidoreductase chain 2 of Genetta servalina (Servaline genet).